The chain runs to 152 residues: Large ribosomal subunit protein bL9 (152 aa).

This sequence belongs to the bacterial ribosomal protein bL9 family.

Functionally, binds to the 23S rRNA. The polypeptide is Large ribosomal subunit protein bL9 (Mycobacterium leprae (strain Br4923)).